Consider the following 227-residue polypeptide: DNA repair protein RecO (227 aa).

This sequence belongs to the RecO family.

In terms of biological role, involved in DNA repair and RecF pathway recombination. The sequence is that of DNA repair protein RecO from Pseudomonas savastanoi pv. phaseolicola (strain 1448A / Race 6) (Pseudomonas syringae pv. phaseolicola (strain 1448A / Race 6)).